The primary structure comprises 311 residues: Maspardin (311 aa).

Residues 86–159 (EFCDGFRKLL…NSFWLMPSFM (74 aa)) form the AB hydrolase-1 domain.

Belongs to the AB hydrolase superfamily.

The protein localises to the cytoplasm. The chain is Maspardin (spg21) from Danio rerio (Zebrafish).